The following is a 335-amino-acid chain: Twinfilin (335 aa).

ADF-H domains are found at residues 4–140 (SSGI…QHKL) and 176–316 (GISF…NELH). Residues 307 to 335 (SEESIINELHPPKVEEKKAFSKPSRPGRK) form a disordered region. A compositionally biased stretch (basic and acidic residues) spans 316-325 (HPPKVEEKKA).

Belongs to the actin-binding proteins ADF family. Twinfilin subfamily. As to quaternary structure, interacts with G-actin; ADP-actin form.

It is found in the cytoplasm. Its subcellular location is the cytoskeleton. It localises to the cell cortex. Actin-binding protein involved in motile and morphological processes. Inhibits actin polymerization, likely by sequestering G-actin. This chain is Twinfilin (twfA), found in Dictyostelium discoideum (Social amoeba).